Consider the following 560-residue polypeptide: uncharacterized protein (560 aa).

The Cytoplasmic segment spans residues 1 to 17 (MEPKRKSGSLAKHDLPQ). A helical membrane pass occupies residues 18 to 38 (FYLLIMLYLAQGIPVGLAFGT). Residues 39–54 (VPFLLKSLAKETSFTS) lie on the Extracellular side of the membrane. Residues 55–75 (LGIFSMATYPYSLKIIWSPIV) traverse the membrane as a helical segment. Residues 76-88 (DSLYNKRIGRRRS) lie on the Cytoplasmic side of the membrane. A helical membrane pass occupies residues 89 to 109 (WIIPVQFVSGFVLWALGWCIS). The Extracellular segment spans residues 110-139 (QGIIFDGVDDAFHNRGNGTLHSVSIKNLTW). The chain crosses the membrane as a helical span at residues 140-160 (WFGLLVFLCATQDIAVDGWAL). At 161-172 (TILSKESLSYAS) the chain is on the cytoplasmic side. The chain crosses the membrane as a helical span at residues 173-193 (TAQTIGLNIGYFMSFTIFLSL). The Extracellular segment spans residues 194–214 (NSSDFANKYFRNIPLDHGFIS). Residues 215-235 (LGGYMKFSGMLYIVITIYIIF) form a helical membrane-spanning segment. At 236 to 329 (CTKEKPYVEY…KLLEQGFKRE (94 aa)) the chain is on the cytoplasmic side. Residues 330 to 350 (DLAVTVLIDLPFEIIFGYYVV) traverse the membrane as a helical segment. Residues 351–374 (KWSSDKDPMIRDNRRLRNSTGTNK) are Extracellular-facing. Residues 375–395 (VIKFLVGDAGVLTPWLWGFLG) traverse the membrane as a helical segment. Over 396–421 (RLAAAVLGSYVVKQFPKDGEISTGYF) the chain is Cytoplasmic. Residues 422-442 (CLVIFQHLLGSFMNTVQFIGI) form a helical membrane-spanning segment. Residues 443–521 (SAFHTRVADP…LNGTVTILRD (79 aa)) lie on the Extracellular side of the membrane. Residues 522 to 542 (GYYITNLICIVVGLFLYFGYL) form a helical membrane-spanning segment. Topologically, residues 543 to 560 (KRKILHLQSLPISSWRCT) are cytoplasmic.

It localises to the membrane. This is an uncharacterized protein from Saccharomyces cerevisiae (strain ATCC 204508 / S288c) (Baker's yeast).